Consider the following 241-residue polypeptide: Proteasome subunit alpha (241 aa).

It belongs to the peptidase T1A family. As to quaternary structure, the 20S proteasome core is composed of 14 alpha and 14 beta subunits that assemble into four stacked heptameric rings, resulting in a barrel-shaped structure. The two inner rings, each composed of seven catalytic beta subunits, are sandwiched by two outer rings, each composed of seven alpha subunits. The catalytic chamber with the active sites is on the inside of the barrel. Has a gated structure, the ends of the cylinder being occluded by the N-termini of the alpha-subunits. Is capped at one or both ends by the proteasome regulatory ATPase, PAN.

The protein localises to the cytoplasm. The formation of the proteasomal ATPase PAN-20S proteasome complex, via the docking of the C-termini of PAN into the intersubunit pockets in the alpha-rings, triggers opening of the gate for substrate entry. Interconversion between the open-gate and close-gate conformations leads to a dynamic regulation of the 20S proteasome proteolysis activity. Functionally, component of the proteasome core, a large protease complex with broad specificity involved in protein degradation. The polypeptide is Proteasome subunit alpha (Saccharolobus islandicus (strain M.16.4 / Kamchatka #3) (Sulfolobus islandicus)).